A 291-amino-acid chain; its full sequence is Undecaprenyl-diphosphatase (291 aa).

8 helical membrane-spanning segments follow: residues 1–21 (MFII…LTEF), 48–68 (SAFT…AWVF), 102–122 (LHVL…DDFI), 126–146 (LFSV…MIIA), 162–182 (ISYF…WPGF), 203–223 (SDFT…LSLL), 231–251 (IADI…GLIA), and 267–287 (FAIY…GFGI).

Belongs to the UppP family.

The protein resides in the cell membrane. It catalyses the reaction di-trans,octa-cis-undecaprenyl diphosphate + H2O = di-trans,octa-cis-undecaprenyl phosphate + phosphate + H(+). Its function is as follows. Catalyzes the dephosphorylation of undecaprenyl diphosphate (UPP). Confers resistance to bacitracin. The polypeptide is Undecaprenyl-diphosphatase (Staphylococcus aureus (strain MRSA252)).